The sequence spans 157 residues: Urease accessory protein UreE (157 aa).

The protein belongs to the UreE family.

The protein resides in the cytoplasm. In terms of biological role, involved in urease metallocenter assembly. Binds nickel. Probably functions as a nickel donor during metallocenter assembly. This Paenarthrobacter aurescens (strain TC1) protein is Urease accessory protein UreE.